The following is a 459-amino-acid chain: Ceramide glucosyltransferase 3 (459 aa).

Residues 77–97 form a helical membrane-spanning segment; the sequence is LIAIVGFVFVFCLYLIHIIAL. Residue Asp156 is a short sequence motif, D1. Residue Asp208 is a short sequence motif, D2. Position 302 (Asp302) is a short sequence motif, D3. Residue Asp302 is the Proton acceptor of the active site. Positions 338–342 match the (Q/R)XXRW motif; the sequence is RICRW. Helical transmembrane passes span 367–387 and 415–435; these read LIMA…ILIL and FMLI…KALL.

The protein belongs to the glycosyltransferase 2 family. As to expression, expressed in pharyngeal intestinal valve, intestinal rectal valve and hypodermis.

It localises to the membrane. The enzyme catalyses an N-acylsphing-4-enine + UDP-alpha-D-glucose = a beta-D-glucosyl-(1&lt;-&gt;1')-N-acylsphing-4-enine + UDP + H(+). It catalyses the reaction an N-acyl-15-methylhexadecasphing-4-enine + UDP-alpha-D-glucose = an N-acyl-1-beta-D-glucosyl-15-methylhexadecasphing-4-enine + UDP + H(+). Its pathway is lipid metabolism; sphingolipid metabolism. Its function is as follows. Catalyzes the first glycosylation step in glycosphingolipid biosynthesis, the transfer of glucose to ceramide to produce glucosylceramides (GlcCer). GlcCer are known to contribute to the physical properties and physiological functions of membranes and may regulate signal transduction. Seems to be the major active form in the nematode. Only branched-chain sphingoid bases like 15-methylhexadecasphing-4-enine are used for generating complex sphingolipids in Caenorhabditis elegans. Together with cgt-1, plays a role in the trafficking of proteins such as mig-14 to the cell membrane in intestinal cells. This Caenorhabditis elegans protein is Ceramide glucosyltransferase 3.